The following is an 85-amino-acid chain: Three-finger toxin MALT0044C (85 aa).

The first 21 residues, 1 to 21 (MKTLLLTLVVVTIVCLDLGNT), serve as a signal peptide directing secretion. Intrachain disulfides connect Cys-24/Cys-45, Cys-38/Cys-63, Cys-67/Cys-78, and Cys-79/Cys-84.

It belongs to the three-finger toxin family. Short-chain subfamily. As to expression, expressed by the venom gland.

The protein localises to the secreted. This is Three-finger toxin MALT0044C from Micrurus altirostris (Uruguayan coral snake).